The following is a 248-amino-acid chain: Octanoyltransferase (248 aa).

The 182-residue stretch at 53–234 (ADTVDEIWIV…RLIANLDGES (182 aa)) folds into the BPL/LPL catalytic domain. Substrate is bound by residues 93–100 (RGGQITYH), 165–167 (ALG), and 178–180 (GLS). Cysteine 196 functions as the Acyl-thioester intermediate in the catalytic mechanism.

The protein belongs to the LipB family.

The protein localises to the cytoplasm. It catalyses the reaction octanoyl-[ACP] + L-lysyl-[protein] = N(6)-octanoyl-L-lysyl-[protein] + holo-[ACP] + H(+). It functions in the pathway protein modification; protein lipoylation via endogenous pathway; protein N(6)-(lipoyl)lysine from octanoyl-[acyl-carrier-protein]: step 1/2. In terms of biological role, catalyzes the transfer of endogenously produced octanoic acid from octanoyl-acyl-carrier-protein onto the lipoyl domains of lipoate-dependent enzymes. Lipoyl-ACP can also act as a substrate although octanoyl-ACP is likely to be the physiological substrate. The protein is Octanoyltransferase of Burkholderia multivorans (strain ATCC 17616 / 249).